The chain runs to 1460 residues: Nucleoporin NUP159 (1460 aa).

The interval 1 to 500 (MSSLKDEVPT…SEQDATDPAS (500 aa)) is interaction with DBP5. One copy of the FG 1 repeat lies at 228–231 (AVFG). The PXFG 1 repeat unit spans residues 267–270 (PPFG). Residues 401 to 435 (KSLSPTSEKIPIAGQEQEEKKKNNESSKALSENPF) are disordered. Ser404 carries the post-translational modification Phosphoserine. One copy of the SXFGXPXFG 1 repeat lies at 462-470 (STFGAPSFG). A disordered region spans residues 483–504 (STSTGVASSEQDATDPASAKPV). The tract at residues 497–701 (DPASAKPVFG…KPNTSTKPKT (205 aa)) is interactions with CRM1 and GLE1. An SXFGXPXFG 2; approximate repeat occupies 503–511 (PVFGKPAFG). An SXFGXPXFG 3; approximate repeat occupies 522–530 (YAFGKPSFG). The PXFG 2 repeat unit spans residues 532–535 (PSFG). The disordered stretch occupies residues 533–619 (SFGSGKSSVE…SAFGTASSNE (87 aa)). Composition is skewed to polar residues over residues 536 to 546 (SGKSSVESPAS), 556 to 567 (GTPSFGSGNSSV), 582 to 593 (GTPSFGSGNSSA), and 607 to 619 (FGTSAFGTASSNE). The stretch at 548-556 (SAFGKPSFG) is one SXFGXPXFG 4 repeat. One copy of the PXFG 3 repeat lies at 558-561 (PSFG). One copy of the SXFGXPXFG 5 repeat lies at 574-582 (SAFGKPSFG). The PXFG 4 repeat unit spans residues 584 to 587 (PSFG). Residues 600–608 (SAFGKPSFG) form an SXFGXPXFG 6 repeat. The SXFG 1 repeat unit spans residues 610–613 (SAFG). An SXFGXPXFG 7; approximate repeat occupies 624–632 (SIFGKAAFG). The stretch at 642-645 (ELFG) is one FG 2 repeat. The disordered stretch occupies residues 647–704 (NFTISKPTVDSPKEVDSTSPFPSSGDQSEDESKSDVDSSSTPFGTKPNTSTKPKTNAF). Ser657 is modified (phosphoserine). A compositionally biased stretch (low complexity) spans 683–704 (DSSSTPFGTKPNTSTKPKTNAF). Residues 687-690 (TPFG) form an FG 3 repeat. One copy of the FXFG 1 repeat lies at 704-707 (FDFG). The stretch at 709 to 712 (SSFG) is one SXFG 2 repeat. Ser724 is subject to Phosphoserine. Composition is skewed to polar residues over residues 727–750 (TFKFGTQASPFSSQLGNKSPFSSF), 757–767 (NGSLSKGSTSE), and 778–800 (NGPNVSGNDLTDSTVEQTSSTRL). Positions 727-824 (TFKFGTQASP…EAQKSPIGKL (98 aa)) are disordered. The FXFG 2 repeat unit spans residues 728–731 (FKFG). 2 positions are modified to phosphoserine: Ser735 and Ser745. The residue at position 803 (Thr803) is a Phosphothreonine. The span at 804-814 (PSDEDGEVVEE) shows a compositional bias: acidic residues. Ser805 and Ser819 each carry phosphoserine. One copy of the PXFG 5 repeat lies at 842-845 (PVFG). Polar residues predominate over residues 861–889 (TNITKPSSTTPAFSFGNSTMNKSNTSTVS). Residues 861-1092 (TNITKPSSTT…DINTDELPHG (232 aa)) are disordered. One copy of the FXFG 3 repeat lies at 873–876 (FSFG). Ser889 is subject to Phosphoserine. Over residues 917 to 936 (AKEERTGESSKKDHNDDPKD) the composition is skewed to basic and acidic residues. Residue Ser940 is modified to Phosphoserine. The span at 942–958 (SEISVRTSESAFDTTAN) shows a compositional bias: polar residues. Composition is skewed to basic and acidic residues over residues 960–1002 (EIPK…KNNE), 1017–1027 (ALKKDNEKENF), 1035–1061 (QFEDHQSSEEDASEKDSRQSSEVKESD), and 1068–1092 (SDRDESISESYDKLEDINTDELPHG). The interval 1086-1175 (TDELPHGGEA…TCNFSVQTFE (90 aa)) is interaction with DYN2. Residues 1223-1460 (AEFTVLMENI…DFFKNLNMAK (238 aa)) are interaction with NUP82. 2 coiled-coil regions span residues 1279–1320 (EQMQ…YLFL) and 1383–1418 (AKLAKESLARDGLLKEIKLLREQVSRLQLEEKGKKA).

As to quaternary structure, component of the nuclear pore complex (NPC). NPC constitutes the exclusive means of nucleocytoplasmic transport. NPCs allow the passive diffusion of ions and small molecules and the active, nuclear transport receptor-mediated bidirectional transport of macromolecules such as proteins, RNAs, ribonucleoparticles (RNPs), and ribosomal subunits across the nuclear envelope. Due to its 8-fold rotational symmetry, all subunits are present with 8 copies or multiples thereof. Part of the NUP82 subcomplex, interacts with NUP82 through its C-terminal coiled coil. This subcomplex is the base for interactions with NUP116 and GLE2, with NUP42 and GLE1 and with DYN2. Interacts directly with DYN2. Interacts through its FG repeats with karyopherins, such as heterodimeric mRNA transport factor MEX67/MTR2, CRM1 (XPO1), and PSE1 (GSP1-GDP dependent). Interaction with CRM1 (XPO1) is GSP1-GTP dependent and stimulated by RNA1. NUP159 also interacts with GLE1 and the ATP-dependent RNA helicase DBP5.

Its subcellular location is the nucleus. The protein localises to the nuclear pore complex. The protein resides in the nucleus membrane. Its function is as follows. Functions as a component of the nuclear pore complex (NPC). NPC components, collectively referred to as nucleoporins (NUPs), can play the role of both NPC structural components and of docking or interaction partners for transiently associated nuclear transport factors. Active directional transport is assured by both, a Phe-Gly (FG) repeat affinity gradient for these transport factors across the NPC and a transport cofactor concentration gradient across the nuclear envelope (GSP1 and GSP2 GTPases associated predominantly with GTP in the nucleus, with GDP in the cytoplasm). NUP159 plays an important role in several nuclear export pathways including poly(A)+ RNA, pre-ribosome, and protein export. This Saccharomyces cerevisiae (strain ATCC 204508 / S288c) (Baker's yeast) protein is Nucleoporin NUP159 (NUP159).